Consider the following 2009-residue polypeptide: Protein Daple (2009 aa).

Residues 11-131 form the Calponin-homology (CH) domain; the sequence is LFLQSPLVTW…KVLLLVLGCA (121 aa). Residues 221–251 are disordered; that stretch reads QTQQPPSPGKFSSPDSTPSPTSSLSSEDKQH. Phosphoserine is present on residues Ser227 and Ser239. Over residues 232–245 the composition is skewed to low complexity; it reads SSPDSTPSPTSSLS. 2 coiled-coil regions span residues 247–425 and 456–1008; these read EDKQ…QKQS and ELNE…TQEG. At Ser486 the chain carries Phosphoserine. A disordered region spans residues 1002-1036; that stretch reads LRQTQEGGDKAQNALKRPPGKVTSHQEKEAWEPSH. Positions 1025–1036 are enriched in basic and acidic residues; sequence SHQEKEAWEPSH. Positions 1190 to 1384 form a coiled coil; the sequence is HRNLELEHKE…LEEKIMDQYK (195 aa). Residues 1410 to 1419 show a composition bias toward basic and acidic residues; sequence KEGSRERLKS. 2 disordered regions span residues 1410–1716 and 1757–1787; these read KEGS…GAKM and GMPS…HMPV. The segment covering 1430 to 1439 has biased composition (low complexity); it reads PSDPASPSPS. Ser1435 bears the Phosphoserine mark. The span at 1440 to 1449 shows a compositional bias: polar residues; sequence QALRSQTENP. Composition is skewed to low complexity over residues 1510–1524 and 1562–1581; these read TFST…SSST and NSLE…SLKG. The residue at position 1592 (Ser1592) is a Phosphoserine. The short motif at 1652–1683 is the GBA element; sequence HSASPSSEMVTLEEFLEESNRGGSPTHDTPSC. Residues 1681 to 1697 show a composition bias toward basic and acidic residues; it reads PSCRDDLLSDYFRKAHD. Positions 1761–1783 are enriched in polar residues; that stretch reads RQVQPPQSLSLGRPRQTTMTQNC. Ser1798 is modified (phosphoserine). Residues 1808–2009 form a disordered region; sequence SGPEACRPES…QTVWYEYGCV (202 aa). Residues 1866 to 1883 show a composition bias toward basic and acidic residues; that stretch reads RPLDTRRFSLAPPKEERL. Polar residues predominate over residues 1898 to 1911; it reads GCSSGSNPQIQHFS. The span at 1943–1954 shows a compositional bias: gly residues; sequence TSEGDGGPGHGY. Residues 1981–1991 are compositionally biased toward polar residues; sequence SQGSSSKSTPA. The short motif at 2006–2009 is the PDZ-binding element; the sequence is YGCV. The segment at 2007–2009 is DVL1-binding; it reads GCV.

Belongs to the CCDC88 family. In terms of assembly, homooligomer. Interacts with DVL1 (via PDZ domain); dissociates following initiation of non-canonical Wnt signaling. Interacts (via C-terminus) with ligand-activated Wnt receptor FZD7; competes with DVL1 for binding to FZD7 and displaces DVL1 from ligand-activated FZD7. Interacts (via GBA motif) with guanine nucleotide-binding protein G(i) alpha subunits GNAI1, GNAI2 and GNAI3 (inactive GDP-bound form); interacts with higher affinity with GNAI1 and GNAI3 than with GNAI2 and interaction leads to G(i) alpha subunit activation. Does not interact with GNAO1.

The protein resides in the cytoplasm. It is found in the cell junction. Functionally, required for activation of guanine nucleotide-binding proteins (G-proteins) during non-canonical Wnt signaling. Binds to ligand-activated Wnt receptor FZD7, displacing DVL1 from the FZD7 receptor and leading to inhibition of canonical Wnt signaling. Acts as a non-receptor guanine nucleotide exchange factor by also binding to guanine nucleotide-binding protein G(i) alpha (Gi-alpha) subunits, leading to their activation. Binding to Gi-alpha subunits displaces the beta and gamma subunits from the heterotrimeric G-protein complex, triggering non-canonical Wnt responses such as activation of RAC1 and PI3K-AKT signaling. Promotes apical constriction of cells via ARHGEF18. This chain is Protein Daple (Ccdc88c), found in Mus musculus (Mouse).